Reading from the N-terminus, the 30-residue chain is Varv peptide G (30 aa).

The segment at residues 1-30 (GVPVCGETCFGGTCNTPGCSCDPWPVCSRN) is a cross-link (cyclopeptide (Gly-Asn)). 3 disulfide bridges follow: C5/C19, C9/C21, and C14/C27.

This is a cyclic peptide.

Its function is as follows. Probably participates in a plant defense mechanism. The sequence is that of Varv peptide G from Viola arvensis (European field pansy).